Consider the following 592-residue polypeptide: Inactive metallocarboxypeptidase ECM14 (592 aa).

Residues methionine 1–alanine 21 form the signal peptide. A propeptide spanning residues isoleucine 22 to serine 174 is cleaved from the precursor. The span at serine 170 to threonine 179 shows a compositional bias: polar residues. Residues serine 170 to serine 191 form a disordered region. Positions aspartate 202–leucine 521 constitute a Peptidase M14 domain. Zn(2+) contacts are provided by histidine 264 and glutamate 267. Substrate-binding positions include histidine 264–glutamate 267, arginine 322, and aspartate 339–arginine 340. Cysteine 333 and cysteine 356 form a disulfide bridge. Residue asparagine 349 is glycosylated (N-linked (GlcNAc...) asparagine). Histidine 396 contacts Zn(2+). Serine 397–tyrosine 398 serves as a coordination point for substrate. Positions alanine 542–arginine 592 are disordered. Residues aspartate 548 to glycine 558 show a composition bias toward acidic residues. The segment covering glutamine 559 to asparagine 575 has biased composition (basic and acidic residues).

The protein belongs to the peptidase M14 family. The cofactor is Zn(2+).

The protein localises to the vacuole. The protein resides in the secreted. Inactive carboxypeptidase that may play a role in cell wall organization and biogenesis. This is Inactive metallocarboxypeptidase ECM14 (ECM14) from Blastomyces gilchristii (strain SLH14081) (Blastomyces dermatitidis).